A 185-amino-acid polypeptide reads, in one-letter code: Elongation factor P 1 (185 aa).

Belongs to the elongation factor P family.

It localises to the cytoplasm. It participates in protein biosynthesis; polypeptide chain elongation. Its function is as follows. Involved in peptide bond synthesis. Stimulates efficient translation and peptide-bond synthesis on native or reconstituted 70S ribosomes in vitro. Probably functions indirectly by altering the affinity of the ribosome for aminoacyl-tRNA, thus increasing their reactivity as acceptors for peptidyl transferase. This chain is Elongation factor P 1 (efp1), found in Chlamydia trachomatis serovar D (strain ATCC VR-885 / DSM 19411 / UW-3/Cx).